The primary structure comprises 234 residues: MIRPLIIALDVENRQNMQELLKTLPKPLFVKVGMELFYSEGPAVIEQLKDEGHQVFLDLKLHDIPNTVKRAMRQLATLGVDIVNVHVAGGVNMMAAAREGLEAGTVDGRNRPKLIGVTQLTSTNEAMLQKELLIQSNMNGAVSHYARLAKEAGLDGVVSSAQEVPIIHEHCGPSFLTVTPGIRLKEDDKGDQTRIVTPEEARTLGSWAIVVGRSITAAPDPAAAYEIIRKQWEG.

Substrate-binding positions include D10, K31, 58-67, T121, R183, Q192, G212, and R213; that span reads DLKLHDIPNT. K60 (proton donor) is an active-site residue.

The protein belongs to the OMP decarboxylase family. Type 1 subfamily. In terms of assembly, homodimer.

It carries out the reaction orotidine 5'-phosphate + H(+) = UMP + CO2. The protein operates within pyrimidine metabolism; UMP biosynthesis via de novo pathway; UMP from orotate: step 2/2. Its function is as follows. Catalyzes the decarboxylation of orotidine 5'-monophosphate (OMP) to uridine 5'-monophosphate (UMP). The polypeptide is Orotidine 5'-phosphate decarboxylase (Halalkalibacterium halodurans (strain ATCC BAA-125 / DSM 18197 / FERM 7344 / JCM 9153 / C-125) (Bacillus halodurans)).